A 1064-amino-acid polypeptide reads, in one-letter code: Carbamoyl phosphate synthase large chain (1064 aa).

The tract at residues 1-401 is carboxyphosphate synthetic domain; that stretch reads MPKRNDIKKI…SLLKAVRSLE (401 aa). The ATP site is built by arginine 129, arginine 169, glycine 175, glycine 176, glutamate 208, isoleucine 210, glutamate 215, glycine 241, valine 242, histidine 243, glutamine 284, and glutamate 298. The ATP-grasp 1 domain occupies 133 to 327; the sequence is KELCESINEP…IAKMSAKIAI (195 aa). Mg(2+)-binding residues include glutamine 284, glutamate 298, and asparagine 300. Mn(2+)-binding residues include glutamine 284, glutamate 298, and asparagine 300. The tract at residues 402 to 546 is oligomerization domain; that stretch reads IGVFHNEMTE…YSTYEWENES (145 aa). The carbamoyl phosphate synthetic domain stretch occupies residues 547–929; sequence KRSDKEKIIV…ALYKSFEAAK (383 aa). The ATP-grasp 2 domain maps to 671–861; it reads EKALQDLDIP…MAQLATQMIL (191 aa). ATP is bound by residues arginine 707, serine 746, leucine 748, glutamate 752, glycine 777, valine 778, histidine 779, serine 780, glutamine 820, and glutamate 832. Residues glutamine 820, glutamate 832, and asparagine 834 each coordinate Mg(2+). Mn(2+)-binding residues include glutamine 820, glutamate 832, and asparagine 834. Residues 930–1064 form the MGS-like domain; sequence LHMADYGSVL…QSRSFTTKNI (135 aa). Residues 930 to 1064 are allosteric domain; sequence LHMADYGSVL…QSRSFTTKNI (135 aa).

This sequence belongs to the CarB family. In terms of assembly, composed of two chains; the small (or glutamine) chain promotes the hydrolysis of glutamine to ammonia, which is used by the large (or ammonia) chain to synthesize carbamoyl phosphate. Tetramer of heterodimers (alpha,beta)4. It depends on Mg(2+) as a cofactor. Requires Mn(2+) as cofactor.

It catalyses the reaction hydrogencarbonate + L-glutamine + 2 ATP + H2O = carbamoyl phosphate + L-glutamate + 2 ADP + phosphate + 2 H(+). It carries out the reaction hydrogencarbonate + NH4(+) + 2 ATP = carbamoyl phosphate + 2 ADP + phosphate + 2 H(+). The protein operates within amino-acid biosynthesis; L-arginine biosynthesis; carbamoyl phosphate from bicarbonate: step 1/1. It functions in the pathway pyrimidine metabolism; UMP biosynthesis via de novo pathway; (S)-dihydroorotate from bicarbonate: step 1/3. In terms of biological role, large subunit of the glutamine-dependent carbamoyl phosphate synthetase (CPSase). CPSase catalyzes the formation of carbamoyl phosphate from the ammonia moiety of glutamine, carbonate, and phosphate donated by ATP, constituting the first step of 2 biosynthetic pathways, one leading to arginine and/or urea and the other to pyrimidine nucleotides. The large subunit (synthetase) binds the substrates ammonia (free or transferred from glutamine from the small subunit), hydrogencarbonate and ATP and carries out an ATP-coupled ligase reaction, activating hydrogencarbonate by forming carboxy phosphate which reacts with ammonia to form carbamoyl phosphate. The sequence is that of Carbamoyl phosphate synthase large chain from Lactococcus lactis subsp. cremoris (strain SK11).